Here is a 105-residue protein sequence, read N- to C-terminus: Putative pterin-4-alpha-carbinolamine dehydratase (105 aa).

The protein belongs to the pterin-4-alpha-carbinolamine dehydratase family.

The catalysed reaction is (4aS,6R)-4a-hydroxy-L-erythro-5,6,7,8-tetrahydrobiopterin = (6R)-L-erythro-6,7-dihydrobiopterin + H2O. The sequence is that of Putative pterin-4-alpha-carbinolamine dehydratase from Sinorhizobium fredii (strain NBRC 101917 / NGR234).